The chain runs to 766 residues: Serine/threonine-protein kinase B-raf (766 aa).

A compositionally biased stretch (gly residues) spans 1-13; it reads MAALSGGGGGGAE. The disordered stretch occupies residues 1–38; it reads MAALSGGGGGGAEPGQALFNGDMEPEAGAGAGAAASSA. Alanine 2 bears the N-acetylalanine mark. A Phosphoserine modification is found at serine 151. The RBD domain occupies 155-227; sequence PIVRVFLPNK…TGEELHVEVL (73 aa). The Phorbol-ester/DAG-type zinc-finger motif lies at 234–280; sequence THNFVRKTFFTLAFCDFCRKLLFQGFRCQTCGYKFHQRCSTEVPLMC. Histidine 235, cysteine 248, cysteine 251, cysteine 261, cysteine 264, histidine 269, cysteine 272, and cysteine 280 together coordinate Zn(2+). The disordered stretch occupies residues 308-454; sequence AETALTSGSS…DSSDDWEIPD (147 aa). The span at 314–341 shows a compositional bias: low complexity; the sequence is SGSSPSAPASDSIGPQILTSPSPSKSIP. Phosphoserine is present on serine 333. Over residues 348-363 the composition is skewed to basic and acidic residues; the sequence is PADEDHRNQFGQRDRS. Phosphoserine; by SGK1 is present on serine 365. The residue at position 373 (threonine 373) is a Phosphothreonine; by autocatalysis. Position 396 is a phosphothreonine (threonine 396). Serine 399 is subject to Phosphoserine. Threonine 401 is modified (phosphothreonine). Residues 423–447 are compositionally biased toward basic and acidic residues; that stretch reads QRERKSSSSSEDRNRMKTLGRRDSS. Serine 446 and serine 447 each carry phosphoserine. Positions 457–717 constitute a Protein kinase domain; it reads ITVGQRIGSG…PQILASIELL (261 aa). Residues 463–471 and lysine 483 each bind ATP; that span reads IGSGSFGTV. Aspartate 576 functions as the Proton acceptor in the catalytic mechanism. Residue lysine 578 forms a Glycyl lysine isopeptide (Lys-Gly) (interchain with G-Cter in ubiquitin) linkage. Arginine 671 carries the post-translational modification Omega-N-methylarginine; by PRMT5. Phosphoserine occurs at positions 729 and 750. Threonine 753 is subject to Phosphothreonine; by MAPK1.

It belongs to the protein kinase superfamily. TKL Ser/Thr protein kinase family. RAF subfamily. Monomer. Homodimer. Heterodimerizes with RAF1, and the heterodimer possesses a highly increased kinase activity compared to the respective homodimers or monomers. Heterodimerization is mitogen-regulated and enhanced by 14-3-3 proteins. MAPK1/ERK2 activation can induce a negative feedback that promotes the dissociation of the heterodimer by phosphorylating BRAF at Thr-753. Heterodimerizes (via N-terminus) with KSR1 (via N-terminus) or KSR2 (via N-terminus) in a MAP2K1-dependent manner. Interacts with MAP2K1 and MAP2K2. Found in a complex with at least BRAF, HRAS, MAP2K1, MAPK3 and RGS14. Interacts with RIT1. Interacts (via N-terminus) with RGS14 (via RBD domains); the interaction mediates the formation of a ternary complex with RAF1, a ternary complex inhibited by GNAI1. Interacts with DGKH. Interacts with PRMT5. Interacts with KSR2. Interacts with AKAP13, MAP2K1 and KSR1. Identified in a complex with AKAP13, MAP2K1 and KSR1. Interacts with FNIP1 and FNIP2. Zn(2+) serves as cofactor. Phosphorylation at Ser-365 by SGK1 inhibits its activity. Phosphorylation at Thr-753 by MAPK1. Dephosphorylation of Ser-365 by the SHOC2-MRAS-PP1c (SMP) complex consisting of SHOC2, GTP-bound M-Ras/MRAS and the catalytic subunit of protein phosphatase 1 (PPP1CA, PPP1CB or PPP1CC); this relieves inactivation and stimulates kinase activity. Post-translationally, methylation at Arg-671 decreases stability and kinase activity. In terms of processing, ubiquitinated by RNF149; which leads to proteasomal degradation. Polyubiquitinated at Lys-578 in response to EGF. As to expression, brain and testis.

It is found in the nucleus. The protein localises to the cytoplasm. Its subcellular location is the cell membrane. It carries out the reaction L-seryl-[protein] + ATP = O-phospho-L-seryl-[protein] + ADP + H(+). The catalysed reaction is L-threonyl-[protein] + ATP = O-phospho-L-threonyl-[protein] + ADP + H(+). Its activity is regulated as follows. In quiescent cells, maintained in an inactive state via an intramolecular interaction between the protein kinase and N-terminal domains. Following mitogen-mediated cell activation, binds via its RGB domain to active HRAS (GTP-bound) which releases the inhibitory intramolecular interaction between the two domains. This allows the MAP2K1-mediated dimerization of KSR1 or KSR2, and BRAF which activates BRAF. In terms of biological role, protein kinase involved in the transduction of mitogenic signals from the cell membrane to the nucleus. Phosphorylates MAP2K1, and thereby activates the MAP kinase signal transduction pathway. Phosphorylates PFKFB2. May play a role in the postsynaptic responses of hippocampal neurons. The chain is Serine/threonine-protein kinase B-raf from Homo sapiens (Human).